The sequence spans 249 residues: Putative S-adenosyl-L-methionine-dependent methyltransferase Mkms_0592 (249 aa).

Residues Asp-111 and 141–142 (DL) each bind S-adenosyl-L-methionine.

Belongs to the UPF0677 family.

In terms of biological role, exhibits S-adenosyl-L-methionine-dependent methyltransferase activity. This Mycobacterium sp. (strain KMS) protein is Putative S-adenosyl-L-methionine-dependent methyltransferase Mkms_0592.